Reading from the N-terminus, the 725-residue chain is Kinesin-like protein KIF2C (725 aa).

At Ala-2 the chain carries N-acetylalanine. A globular region spans residues Ala-2–Ile-254. A phosphoserine mark is found at Ser-6 and Ser-22. The disordered stretch occupies residues Gln-89 to Thr-116. The residue at position 95 (Ser-95) is a Phosphoserine; by AURKB. The short motif at Ser-98 to Pro-101 is the Microtubule tip localization signal element. Phosphoserine is present on residues Ser-106, Ser-109, Ser-111, Ser-115, Ser-166, Ser-175, Ser-187, and Ser-192. Positions Glu-207–Glu-238 are negative regulator of microtubule-binding. Residues Arg-258–Leu-588 enclose the Kinesin motor domain. Residues Arg-264 and Gly-348–Thr-355 each bind ATP. The Nuclear localization signal signature appears at Lys-415–Lys-418. Phosphoserine is present on residues Ser-519, Ser-621, and Ser-633. Positions Gly-618–Gln-658 form a coiled coil.

It belongs to the TRAFAC class myosin-kinesin ATPase superfamily. Kinesin family. MCAK/KIF2 subfamily. As to quaternary structure, interacts with CENPH. Interacts with MTUS2/TIP150; the interaction is direct. Interacts with MAPRE1; the interaction is direct, regulated by phosphorylation and is probably required for targeting to growing microtubule plus ends. Interacts with KIF18B at microtubule tips; this interaction increases the affinity of both partners for microtubule plus ends and is required for robust microtubule depolymerization. Phosphorylation by AURKA or AURKB strongly reduces KIF18B-binding. Post-translationally, phosphorylation by AURKB, regulates association with centromeres and kinetochores and the microtubule depolymerization activity. Ubiquitinated. Expressed at high levels in thymus and testis, at low levels in small intestine, the mucosal lining of colon, and placenta, and at very low levels in spleen and ovary; expression is not detected in prostate, peripheral blood Leukocytes, heart, brain, lung, liver, skeletal muscle, kidney or pancreas. Isoform 2 is testis-specific.

Its subcellular location is the cytoplasm. It localises to the cytoskeleton. The protein localises to the nucleus. The protein resides in the chromosome. It is found in the centromere. Its subcellular location is the kinetochore. In complex with KIF18B, constitutes the major microtubule plus-end depolymerizing activity in mitotic cells. Regulates the turnover of microtubules at the kinetochore and functions in chromosome segregation during mitosis. Plays a role in chromosome congression and is required for the lateral to end-on conversion of the chromosome-microtubule attachment. The protein is Kinesin-like protein KIF2C (KIF2C) of Homo sapiens (Human).